Consider the following 224-residue polypeptide: Biosynthetic peptidoglycan transglycosylase (224 aa).

Residues Val-9 to Trp-29 form a helical membrane-spanning segment.

The protein belongs to the glycosyltransferase 51 family.

It localises to the cell inner membrane. It catalyses the reaction [GlcNAc-(1-&gt;4)-Mur2Ac(oyl-L-Ala-gamma-D-Glu-L-Lys-D-Ala-D-Ala)](n)-di-trans,octa-cis-undecaprenyl diphosphate + beta-D-GlcNAc-(1-&gt;4)-Mur2Ac(oyl-L-Ala-gamma-D-Glu-L-Lys-D-Ala-D-Ala)-di-trans,octa-cis-undecaprenyl diphosphate = [GlcNAc-(1-&gt;4)-Mur2Ac(oyl-L-Ala-gamma-D-Glu-L-Lys-D-Ala-D-Ala)](n+1)-di-trans,octa-cis-undecaprenyl diphosphate + di-trans,octa-cis-undecaprenyl diphosphate + H(+). The protein operates within cell wall biogenesis; peptidoglycan biosynthesis. Its function is as follows. Peptidoglycan polymerase that catalyzes glycan chain elongation from lipid-linked precursors. This is Biosynthetic peptidoglycan transglycosylase from Acinetobacter baylyi (strain ATCC 33305 / BD413 / ADP1).